Reading from the N-terminus, the 71-residue chain is Venom peptide 2-long (71 aa).

Residues 1 to 24 (MKQSIIIALFATIAVMACLQMVAA) form the signal peptide. AXPX repeat units follow at residues 24–27 (AVPA), 32–35 (AAPG), 44–47 (ASPE), 50–53 (ASPE), and 54–57 (AEPI). Residues 25–54 (VPAPVPEAAPGPVAEAEAYASPEALASPEA) constitute a propeptide that is removed on maturation. The residue at position 68 (Leu68) is a Leucine amide.

Belongs to the MCD family. Protonectin subfamily. As to expression, expressed by the venom gland.

It localises to the secreted. The protein localises to the target cell membrane. Its function is as follows. Antimicrobial peptide with strong activity against the fungus B.cinerea (MIC=0.5 ug/ml), and poor activities against the fungus C.albicans (MIC=100 ug/ml), the Gram-positive bacterium S.aureus (MIC=125 ug/ml) and the Gram-negative bacterium E.coli (MIC=125 ug/ml). Functionally, antimicrobial peptide with strong activity against the fungus B.cinerea (MIC=0.4 uM), and poor activities against the fungus C.albicans (MIC=16 uM), the Gram-positive bacterium S.aureus (MIC=20 uM) and the Gram-negative bacterium E.coli (MIC=79 uM). Shows cytolytic activity against insect cell lines. Has potent hemolytic activity against ovine erythrocytes. Has potent hemolytic activity against human erythrocytes (EC(50)=31 uM). In vivo, peptide injection in the vicinity of the head and thorax of lepidopteran larvae induces feeding disorder followed by death due to starvation. The sequence is that of Venom peptide 2-long from Orancistrocerus drewseni (Solitary wasp).